Here is a 320-residue protein sequence, read N- to C-terminus: Probable cell division protein WhiA (320 aa).

A DNA-binding region (H-T-H motif) is located at residues 276-310 (TLKELGEMVAGGKISKSGINHRLRKIDEIAERLRA).

This sequence belongs to the WhiA family.

Its function is as follows. Involved in cell division and chromosome segregation. The chain is Probable cell division protein WhiA from Geobacillus thermodenitrificans (strain NG80-2).